Here is a 113-residue protein sequence, read N- to C-terminus: Hydrogenase maturation factor HypA (113 aa).

Histidine 2 contributes to the Ni(2+) binding site. Zn(2+) contacts are provided by cysteine 73, cysteine 76, cysteine 89, and cysteine 92.

The protein belongs to the HypA/HybF family.

Its function is as follows. Involved in the maturation of [NiFe] hydrogenases. Required for nickel insertion into the metal center of the hydrogenase. In Azorhizobium caulinodans (strain ATCC 43989 / DSM 5975 / JCM 20966 / LMG 6465 / NBRC 14845 / NCIMB 13405 / ORS 571), this protein is Hydrogenase maturation factor HypA.